The primary structure comprises 293 residues: Probable aspartoacylase (293 aa).

Zn(2+) is bound by residues His14 and Glu17. Residues Arg56 and 63–64 (NR) each bind substrate. His106 contacts Zn(2+). Residues Glu165 and Tyr276 each contribute to the substrate site.

The protein belongs to the AspA/AstE family. Aspartoacylase subfamily. Requires Zn(2+) as cofactor.

It carries out the reaction an N-acyl-L-aspartate + H2O = a carboxylate + L-aspartate. The sequence is that of Probable aspartoacylase from Trichodesmium erythraeum (strain IMS101).